Here is a 54-residue protein sequence, read N- to C-terminus: ATP synthase protein 8 (54 aa).

The chain crosses the membrane as a helical span at residues 9–25 (WVFLFFLVWLVLGFLGL).

It belongs to the ATPase protein 8 family. As to quaternary structure, F-type ATPases have 2 components, CF(1) - the catalytic core - and CF(0) - the membrane proton channel.

The protein resides in the mitochondrion membrane. Mitochondrial membrane ATP synthase (F(1)F(0) ATP synthase or Complex V) produces ATP from ADP in the presence of a proton gradient across the membrane which is generated by electron transport complexes of the respiratory chain. F-type ATPases consist of two structural domains, F(1) - containing the extramembraneous catalytic core and F(0) - containing the membrane proton channel, linked together by a central stalk and a peripheral stalk. During catalysis, ATP synthesis in the catalytic domain of F(1) is coupled via a rotary mechanism of the central stalk subunits to proton translocation. Part of the complex F(0) domain. Minor subunit located with subunit a in the membrane. In Branchiostoma floridae (Florida lancelet), this protein is ATP synthase protein 8 (MTATP8).